The following is a 63-amino-acid chain: Large ribosomal subunit protein uL29 (63 aa).

Belongs to the universal ribosomal protein uL29 family.

This Sodalis glossinidius (strain morsitans) protein is Large ribosomal subunit protein uL29.